The chain runs to 233 residues: tRNA (guanine-N(1)-)-methyltransferase (233 aa).

Residues Gly113 and 133-138 (IGDYVL) contribute to the S-adenosyl-L-methionine site.

The protein belongs to the RNA methyltransferase TrmD family. In terms of assembly, homodimer.

It localises to the cytoplasm. The catalysed reaction is guanosine(37) in tRNA + S-adenosyl-L-methionine = N(1)-methylguanosine(37) in tRNA + S-adenosyl-L-homocysteine + H(+). Functionally, specifically methylates guanosine-37 in various tRNAs. This is tRNA (guanine-N(1)-)-methyltransferase from Ruminiclostridium cellulolyticum (strain ATCC 35319 / DSM 5812 / JCM 6584 / H10) (Clostridium cellulolyticum).